A 340-amino-acid chain; its full sequence is Heat-inducible transcription repressor HrcA (340 aa).

This sequence belongs to the HrcA family.

Its function is as follows. Negative regulator of class I heat shock genes (grpE-dnaK-dnaJ and groELS operons). Prevents heat-shock induction of these operons. The sequence is that of Heat-inducible transcription repressor HrcA from Burkholderia cenocepacia (strain HI2424).